The chain runs to 271 residues: Formamidopyrimidine-DNA glycosylase (271 aa).

Catalysis depends on proline 2, which acts as the Schiff-base intermediate with DNA. Catalysis depends on glutamate 3, which acts as the Proton donor. Lysine 57 acts as the Proton donor; for beta-elimination activity in catalysis. DNA is bound by residues histidine 90, arginine 109, and lysine 151. The segment at 236-270 adopts an FPG-type zinc-finger fold; the sequence is HVYGRGGETCTQCGHLLSEIKLGQRATVFCSLCQK. Arginine 260 functions as the Proton donor; for delta-elimination activity in the catalytic mechanism.

The protein belongs to the FPG family. Monomer. The cofactor is Zn(2+).

It carries out the reaction Hydrolysis of DNA containing ring-opened 7-methylguanine residues, releasing 2,6-diamino-4-hydroxy-5-(N-methyl)formamidopyrimidine.. It catalyses the reaction 2'-deoxyribonucleotide-(2'-deoxyribose 5'-phosphate)-2'-deoxyribonucleotide-DNA = a 3'-end 2'-deoxyribonucleotide-(2,3-dehydro-2,3-deoxyribose 5'-phosphate)-DNA + a 5'-end 5'-phospho-2'-deoxyribonucleoside-DNA + H(+). Its function is as follows. Involved in base excision repair of DNA damaged by oxidation or by mutagenic agents. Acts as a DNA glycosylase that recognizes and removes damaged bases. Has a preference for oxidized purines, such as 7,8-dihydro-8-oxoguanine (8-oxoG). Has AP (apurinic/apyrimidinic) lyase activity and introduces nicks in the DNA strand. Cleaves the DNA backbone by beta-delta elimination to generate a single-strand break at the site of the removed base with both 3'- and 5'-phosphates. The polypeptide is Formamidopyrimidine-DNA glycosylase (Shewanella halifaxensis (strain HAW-EB4)).